The chain runs to 311 residues: Probable dihydroorotate dehydrogenase A (fumarate) (311 aa).

Residues Lys45, 69 to 73, and Asn128 contribute to the substrate site; that span reads NSMGL. Residue 45–46 participates in FMN binding; that stretch reads KT. Asn128 serves as a coordination point for FMN. Cys131 serves as the catalytic Nucleophile. Lys165 and Val193 together coordinate FMN. 194–195 is a binding site for substrate; the sequence is NS. Residues Gly220, 248 to 249, and 270 to 271 each bind FMN; these read GG and GT.

This sequence belongs to the dihydroorotate dehydrogenase family. Type 1 subfamily. Homodimer. It depends on FMN as a cofactor.

It localises to the cytoplasm. The catalysed reaction is (S)-dihydroorotate + fumarate = orotate + succinate. The protein operates within pyrimidine metabolism; UMP biosynthesis via de novo pathway. Catalyzes the conversion of dihydroorotate to orotate with fumarate as the electron acceptor. The sequence is that of Probable dihydroorotate dehydrogenase A (fumarate) (pyrDA) from Streptococcus pneumoniae serotype 4 (strain ATCC BAA-334 / TIGR4).